Consider the following 144-residue polypeptide: uncharacterized protein (144 aa).

In terms of domain architecture, Rhodanese spans asparagine 50–isoleucine 140.

This is an uncharacterized protein from Buchnera aphidicola subsp. Acyrthosiphon pisum (strain APS) (Acyrthosiphon pisum symbiotic bacterium).